Reading from the N-terminus, the 499-residue chain is Glutathione reductase, cytosolic (499 aa).

Serine 35, glycine 36, glutamate 55, threonine 72, cysteine 73, and lysine 81 together coordinate FAD. Residue serine 35 participates in glutathione binding. An intrachain disulfide couples cysteine 73 to cysteine 78. Residue tyrosine 130 participates in glutathione binding. Glycine 146 lines the FAD pocket. Residues glycine 211, isoleucine 214, glutamate 217, arginine 234, arginine 240, and glycine 297 each coordinate NADP(+). FAD contacts are provided by aspartate 338 and threonine 346. Residue alanine 376 participates in NADP(+) binding. Histidine 472 lines the FAD pocket. The active-site Proton acceptor is histidine 472.

The protein belongs to the class-I pyridine nucleotide-disulfide oxidoreductase family. Homodimer. The cofactor is FAD.

The protein localises to the cytoplasm. The enzyme catalyses 2 glutathione + NADP(+) = glutathione disulfide + NADPH + H(+). Catalyzes the reduction of glutathione disulfide (GSSG) to reduced glutathione (GSH). Constitutes the major mechanism to maintain a high GSH:GSSG ratio in the cytosol. The sequence is that of Glutathione reductase, cytosolic from Arabidopsis thaliana (Mouse-ear cress).